The following is a 287-amino-acid chain: Large ribosomal subunit protein uL2 (287 aa).

2 stretches are compositionally biased toward basic residues: residues 209–220 and 258–287; these read GRNRWKARRPKV and KTRK…GRQS. The segment at 209–287 is disordered; sequence GRNRWKARRP…SKRSRGGRQS (79 aa).

It belongs to the universal ribosomal protein uL2 family. In terms of assembly, part of the 50S ribosomal subunit. Forms a bridge to the 30S subunit in the 70S ribosome.

Functionally, one of the primary rRNA binding proteins. Required for association of the 30S and 50S subunits to form the 70S ribosome, for tRNA binding and peptide bond formation. It has been suggested to have peptidyltransferase activity; this is somewhat controversial. Makes several contacts with the 16S rRNA in the 70S ribosome. This is Large ribosomal subunit protein uL2 from Acaryochloris marina (strain MBIC 11017).